Reading from the N-terminus, the 225-residue chain is Uracil-DNA glycosylase (225 aa).

Catalysis depends on D65, which acts as the Proton acceptor.

This sequence belongs to the uracil-DNA glycosylase (UDG) superfamily. UNG family.

It localises to the cytoplasm. The catalysed reaction is Hydrolyzes single-stranded DNA or mismatched double-stranded DNA and polynucleotides, releasing free uracil.. Excises uracil residues from the DNA which can arise as a result of misincorporation of dUMP residues by DNA polymerase or due to deamination of cytosine. The polypeptide is Uracil-DNA glycosylase (Clostridium beijerinckii (strain ATCC 51743 / NCIMB 8052) (Clostridium acetobutylicum)).